A 340-amino-acid chain; its full sequence is Phosphoribosylformylglycinamidine cyclo-ligase (340 aa).

It belongs to the AIR synthase family.

Its subcellular location is the cytoplasm. It catalyses the reaction 2-formamido-N(1)-(5-O-phospho-beta-D-ribosyl)acetamidine + ATP = 5-amino-1-(5-phospho-beta-D-ribosyl)imidazole + ADP + phosphate + H(+). The protein operates within purine metabolism; IMP biosynthesis via de novo pathway; 5-amino-1-(5-phospho-D-ribosyl)imidazole from N(2)-formyl-N(1)-(5-phospho-D-ribosyl)glycinamide: step 2/2. This chain is Phosphoribosylformylglycinamidine cyclo-ligase, found in Streptococcus agalactiae serotype Ia (strain ATCC 27591 / A909 / CDC SS700).